A 217-amino-acid chain; its full sequence is Ras-related protein RABA2c (217 aa).

Residues 19–27 (GDSGVGKSN), 38–44 (CLESKST), 67–71 (DTAGQ), 125–128 (NKSD), and 155–157 (SAL) each bind GTP. Positions 41–49 (SKSTIGVEF) match the Effector region motif. Residues 195–217 (PGQGTTINVDDTSGGAKRACCSS) are disordered. Residues Cys-214 and Cys-215 are each lipidated (S-geranylgeranyl cysteine).

This sequence belongs to the small GTPase superfamily. Rab family. As to expression, expressed in root tips.

It localises to the endosome membrane. The protein localises to the golgi apparatus. It is found in the trans-Golgi network membrane. Its function is as follows. Intracellular vesicle trafficking and protein transport. The protein is Ras-related protein RABA2c (RABA2C) of Arabidopsis thaliana (Mouse-ear cress).